Here is a 216-residue protein sequence, read N- to C-terminus: Octanoyltransferase (216 aa).

One can recognise a BPL/LPL catalytic domain in the interval 33-212 (AHTPDELWLV…ILSNILGLTA (180 aa)). Substrate is bound by residues 72-79 (RGGQVTYH), 139-141 (SLG), and 152-154 (GVA). The Acyl-thioester intermediate role is filled by Cys170.

It belongs to the LipB family.

Its subcellular location is the cytoplasm. The enzyme catalyses octanoyl-[ACP] + L-lysyl-[protein] = N(6)-octanoyl-L-lysyl-[protein] + holo-[ACP] + H(+). It functions in the pathway protein modification; protein lipoylation via endogenous pathway; protein N(6)-(lipoyl)lysine from octanoyl-[acyl-carrier-protein]: step 1/2. In terms of biological role, catalyzes the transfer of endogenously produced octanoic acid from octanoyl-acyl-carrier-protein onto the lipoyl domains of lipoate-dependent enzymes. Lipoyl-ACP can also act as a substrate although octanoyl-ACP is likely to be the physiological substrate. In Saccharophagus degradans (strain 2-40 / ATCC 43961 / DSM 17024), this protein is Octanoyltransferase.